The following is a 228-amino-acid chain: L-ribulose-5-phosphate 4-epimerase UlaF (228 aa).

Substrate-binding positions include G26–N27, S43–G44, and S72–S73. Residues D74, H93, and H95 each contribute to the Zn(2+) site. D118 functions as the Proton donor/acceptor in the catalytic mechanism. H167 serves as a coordination point for Zn(2+). Y225 serves as the catalytic Proton donor/acceptor.

It belongs to the aldolase class II family. AraD/FucA subfamily. It depends on Zn(2+) as a cofactor.

The enzyme catalyses L-ribulose 5-phosphate = D-xylulose 5-phosphate. The protein operates within cofactor degradation; L-ascorbate degradation; D-xylulose 5-phosphate from L-ascorbate: step 4/4. Catalyzes the isomerization of L-ribulose 5-phosphate to D-xylulose 5-phosphate. Is involved in the anaerobic L-ascorbate utilization. The sequence is that of L-ribulose-5-phosphate 4-epimerase UlaF from Escherichia coli O45:K1 (strain S88 / ExPEC).